The following is a 212-amino-acid chain: Phosphatidylserine decarboxylase proenzyme (212 aa).

The active-site Schiff-base intermediate with substrate; via pyruvic acid is the S182. Residue S182 is modified to Pyruvic acid (Ser); by autocatalysis.

It belongs to the phosphatidylserine decarboxylase family. PSD-A subfamily. Heterodimer of a large membrane-associated beta subunit and a small pyruvoyl-containing alpha subunit. Pyruvate is required as a cofactor. Post-translationally, is synthesized initially as an inactive proenzyme. Formation of the active enzyme involves a self-maturation process in which the active site pyruvoyl group is generated from an internal serine residue via an autocatalytic post-translational modification. Two non-identical subunits are generated from the proenzyme in this reaction, and the pyruvate is formed at the N-terminus of the alpha chain, which is derived from the carboxyl end of the proenzyme. The post-translation cleavage follows an unusual pathway, termed non-hydrolytic serinolysis, in which the side chain hydroxyl group of the serine supplies its oxygen atom to form the C-terminus of the beta chain, while the remainder of the serine residue undergoes an oxidative deamination to produce ammonia and the pyruvoyl prosthetic group on the alpha chain.

The protein localises to the cell membrane. The enzyme catalyses a 1,2-diacyl-sn-glycero-3-phospho-L-serine + H(+) = a 1,2-diacyl-sn-glycero-3-phosphoethanolamine + CO2. The protein operates within phospholipid metabolism; phosphatidylethanolamine biosynthesis; phosphatidylethanolamine from CDP-diacylglycerol: step 2/2. In terms of biological role, catalyzes the formation of phosphatidylethanolamine (PtdEtn) from phosphatidylserine (PtdSer). In Paraburkholderia xenovorans (strain LB400), this protein is Phosphatidylserine decarboxylase proenzyme.